We begin with the raw amino-acid sequence, 168 residues long: Large ribosomal subunit protein uL10 (168 aa).

This sequence belongs to the universal ribosomal protein uL10 family. In terms of assembly, part of the ribosomal stalk of the 50S ribosomal subunit. The N-terminus interacts with L11 and the large rRNA to form the base of the stalk. The C-terminus forms an elongated spine to which L12 dimers bind in a sequential fashion forming a multimeric L10(L12)X complex.

In terms of biological role, forms part of the ribosomal stalk, playing a central role in the interaction of the ribosome with GTP-bound translation factors. This chain is Large ribosomal subunit protein uL10, found in Clostridioides difficile (strain 630) (Peptoclostridium difficile).